The following is a 984-amino-acid chain: Calsyntenin-1 (984 aa).

The N-terminal stretch at 1–18 is a signal peptide; it reads MRTAYFIFVGALLGVSYA. The Extracellular segment spans residues 19–850; it reads KHHHAARAPI…VGQGAIAGGA (832 aa). Cadherin domains are found at residues 66 to 142 and 143 to 257; these read YLLT…APEI and ENPW…APGV. N-linked (GlcNAc...) asparagine glycosylation is found at Asn206 and Asn305. The helical transmembrane segment at 851 to 871 threads the bilayer; sequence VAVVVVVCVGFLLVLLVIGVL. Topologically, residues 872 to 984 are cytoplasmic; that stretch reads KMRDTPMPRR…ISTNARSYRV (113 aa). The segment at 878-959 is disordered; sequence MPRRRRQKRQ…QTEVLPHLDA (82 aa). The span at 886 to 896 shows a compositional bias: basic and acidic residues; it reads RQSDGGMHWDD. Positions 918-951 are enriched in acidic residues; sequence EFSDEEEEEETDGESECSYRDEEDDVSEDEEDQT.

This sequence belongs to the calsyntenin family. As to quaternary structure, interacts with isoform c of daf-2 (daf-2c); promoting daf-2c localization to synaptic regions. Interacts with klc-2. Interacts with unc-104. A proportion of the protein is proteolytically cleaved before the transmembrane domain in neurons, leading to release in the extracellular space. In terms of tissue distribution, widely expressed in the nervous system. Highly expressed in many head neurons, including most amphid sensory neurons. Also expressed in other tissues, such as intestine and gonadal sheath cells.

The protein resides in the golgi apparatus membrane. It localises to the perikaryon. It is found in the cell projection. Its subcellular location is the axon. The protein localises to the secreted. The protein resides in the synaptic cleft. Cell adhesion molecule involved in associative learning and memory. Acts as a regulator of GABAergic synaptic transmission at neuromuscular junctions by regulating GABA synaptic vesicle precursor transport: possibly functions as a cargo adapter for unc-104-mediated transport of synaptic vesicle precursors. Promotes localization of isoform c of daf-2 (daf-2c) to synaptic regions by acting as a signaling adapter between klc-2 and daf-2c. Functionally, acts as aregulator of glutamate signaling in the sensory neurons by inhibiting the activity of command interneurons, thereby negatively regulating motor circuit activity and locomotion. This Caenorhabditis elegans protein is Calsyntenin-1.